The primary structure comprises 118 residues: Small ribosomal subunit protein eS10 (118 aa).

Residues 91–118 (RLKNAPAERPRPSRGGPRRGGYRGRARD) form a disordered region. Positions 106 to 118 (GPRRGGYRGRARD) are enriched in basic residues.

The protein belongs to the eukaryotic ribosomal protein eS10 family. As to quaternary structure, component of the small ribosomal subunit. Mature ribosomes consist of a small (40S) and a large (60S) subunit. The 40S subunit contains about 32 different proteins and 1 molecule of RNA (18S). The 60S subunit contains 45 different proteins and 3 molecules of RNA (25S, 5.8S and 5S).

The protein localises to the cytoplasm. Component of the ribosome, a large ribonucleoprotein complex responsible for the synthesis of proteins in the cell. The small ribosomal subunit (SSU) binds messenger RNAs (mRNAs) and translates the encoded message by selecting cognate aminoacyl-transfer RNA (tRNA) molecules. The large subunit (LSU) contains the ribosomal catalytic site termed the peptidyl transferase center (PTC), which catalyzes the formation of peptide bonds, thereby polymerizing the amino acids delivered by tRNAs into a polypeptide chain. The nascent polypeptides leave the ribosome through a tunnel in the LSU and interact with protein factors that function in enzymatic processing, targeting, and the membrane insertion of nascent chains at the exit of the ribosomal tunnel. This chain is Small ribosomal subunit protein eS10 (RPS10), found in Candida albicans (strain SC5314 / ATCC MYA-2876) (Yeast).